A 252-amino-acid polypeptide reads, in one-letter code: MLMKRVIPCLDVTAGRVVKGTNFVNLRDAGDPVELAAFYDKEGADELVFLDITASSDGRVTMLDVVRRTAEEVFIPFTVGGGIRTVDDMRLMLKAGADKIGINTAAIKNPRLISEGAIKFGSQCIVVAMDARQVASEKWEVYIHGGRTSTGLDAVEWALKAEELGAGEILLTSMDRDGTKEGFDLALTRTIAQHVKIPVIASGGVGNLEHMARGLTDGMADAALAASIFHFGEYTIRQAKEYLMEQGIPVRL.

Active-site residues include Asp-11 and Asp-130.

This sequence belongs to the HisA/HisF family. Heterodimer of HisH and HisF.

The protein localises to the cytoplasm. It catalyses the reaction 5-[(5-phospho-1-deoxy-D-ribulos-1-ylimino)methylamino]-1-(5-phospho-beta-D-ribosyl)imidazole-4-carboxamide + L-glutamine = D-erythro-1-(imidazol-4-yl)glycerol 3-phosphate + 5-amino-1-(5-phospho-beta-D-ribosyl)imidazole-4-carboxamide + L-glutamate + H(+). It participates in amino-acid biosynthesis; L-histidine biosynthesis; L-histidine from 5-phospho-alpha-D-ribose 1-diphosphate: step 5/9. IGPS catalyzes the conversion of PRFAR and glutamine to IGP, AICAR and glutamate. The HisF subunit catalyzes the cyclization activity that produces IGP and AICAR from PRFAR using the ammonia provided by the HisH subunit. This chain is Imidazole glycerol phosphate synthase subunit HisF, found in Desulforamulus reducens (strain ATCC BAA-1160 / DSM 100696 / MI-1) (Desulfotomaculum reducens).